Reading from the N-terminus, the 207-residue chain is FMN-dependent NADH:quinone oxidoreductase 2 (207 aa).

FMN-binding positions include Ser10, 16–18, 96–99, and 141–144; these read SIS, MYNL, and SRGG.

Belongs to the azoreductase type 1 family. In terms of assembly, homodimer. Requires FMN as cofactor.

The catalysed reaction is 2 a quinone + NADH + H(+) = 2 a 1,4-benzosemiquinone + NAD(+). It catalyses the reaction N,N-dimethyl-1,4-phenylenediamine + anthranilate + 2 NAD(+) = 2-(4-dimethylaminophenyl)diazenylbenzoate + 2 NADH + 2 H(+). In terms of biological role, quinone reductase that provides resistance to thiol-specific stress caused by electrophilic quinones. Functionally, also exhibits azoreductase activity. Catalyzes the reductive cleavage of the azo bond in aromatic azo compounds to the corresponding amines. The sequence is that of FMN-dependent NADH:quinone oxidoreductase 2 from Trichormus variabilis (strain ATCC 29413 / PCC 7937) (Anabaena variabilis).